The primary structure comprises 119 residues: Large ribosomal subunit protein bL19 (119 aa).

It belongs to the bacterial ribosomal protein bL19 family.

Functionally, this protein is located at the 30S-50S ribosomal subunit interface and may play a role in the structure and function of the aminoacyl-tRNA binding site. The protein is Large ribosomal subunit protein bL19 of Pseudoalteromonas translucida (strain TAC 125).